The chain runs to 367 residues: Aminomethyltransferase (367 aa).

Belongs to the GcvT family. In terms of assembly, the glycine cleavage system is composed of four proteins: P, T, L and H.

The enzyme catalyses N(6)-[(R)-S(8)-aminomethyldihydrolipoyl]-L-lysyl-[protein] + (6S)-5,6,7,8-tetrahydrofolate = N(6)-[(R)-dihydrolipoyl]-L-lysyl-[protein] + (6R)-5,10-methylene-5,6,7,8-tetrahydrofolate + NH4(+). In terms of biological role, the glycine cleavage system catalyzes the degradation of glycine. The sequence is that of Aminomethyltransferase from Lysinibacillus sphaericus (strain C3-41).